A 92-amino-acid polypeptide reads, in one-letter code: Small ribosomal subunit protein uS19 (92 aa).

This sequence belongs to the universal ribosomal protein uS19 family.

Protein S19 forms a complex with S13 that binds strongly to the 16S ribosomal RNA. The protein is Small ribosomal subunit protein uS19 of Buchnera aphidicola subsp. Schizaphis graminum (strain Sg).